Reading from the N-terminus, the 63-residue chain is Beta-defensin 4 (63 aa).

The N-terminal stretch at 1–22 is a signal peptide; the sequence is MRIHYLLFSFLLVLLSPLSAFT. At Q23 the chain carries Pyrrolidone carboxylic acid. 3 disulfides stabilise this stretch: C31–C59, C38–C52, and C42–C60.

The protein belongs to the beta-defensin family. In terms of tissue distribution, highly expressed in lung.

The protein resides in the secreted. Functionally, exhibits antimicrobial activity against Gram-negative bacteria and Gram-positive bacteria. May act as a ligand for C-C chemokine receptor CCR6. Binds to CCR6 and induces chemotactic activity of CCR6-expressing cells. The protein is Beta-defensin 4 (Defb4) of Rattus norvegicus (Rat).